Here is a 215-residue protein sequence, read N- to C-terminus: MSTTPVRAAPEVLLLDYGAGNVRSAARALERAGMTVRVTDNAADVPHAPALVVPGQGHFRQVMEAFEHGGFHGPVLDAARAGVPLLGICVGMQLLFDGSEEAPGVPGLGLIAGQVRKFAPAPERKVPQMGWNALEARGDSPLLRGLGPDAYAYFVHSYYVPVDVPVTDGAVTDYGVPFWSALSRGNLHAAQFHPEKSGAVGLALLANFRRELAPA.

One can recognise a Glutamine amidotransferase type-1 domain in the interval 11-215 (EVLLLDYGAG…ANFRRELAPA (205 aa)). Cys-89 functions as the Nucleophile in the catalytic mechanism. Catalysis depends on residues His-193 and Glu-195.

Heterodimer of HisH and HisF.

It localises to the cytoplasm. It carries out the reaction 5-[(5-phospho-1-deoxy-D-ribulos-1-ylimino)methylamino]-1-(5-phospho-beta-D-ribosyl)imidazole-4-carboxamide + L-glutamine = D-erythro-1-(imidazol-4-yl)glycerol 3-phosphate + 5-amino-1-(5-phospho-beta-D-ribosyl)imidazole-4-carboxamide + L-glutamate + H(+). It catalyses the reaction L-glutamine + H2O = L-glutamate + NH4(+). It functions in the pathway amino-acid biosynthesis; L-histidine biosynthesis; L-histidine from 5-phospho-alpha-D-ribose 1-diphosphate: step 5/9. Its function is as follows. IGPS catalyzes the conversion of PRFAR and glutamine to IGP, AICAR and glutamate. The HisH subunit catalyzes the hydrolysis of glutamine to glutamate and ammonia as part of the synthesis of IGP and AICAR. The resulting ammonia molecule is channeled to the active site of HisF. This chain is Imidazole glycerol phosphate synthase subunit HisH (hisH), found in Deinococcus radiodurans (strain ATCC 13939 / DSM 20539 / JCM 16871 / CCUG 27074 / LMG 4051 / NBRC 15346 / NCIMB 9279 / VKM B-1422 / R1).